Here is a 125-residue protein sequence, read N- to C-terminus: Prepro-urotensin II-gamma (125 aa).

A signal peptide spans 1 to 21; that stretch reads MMCNLLLSCSVLLLSCSHLLA. The propeptide occupies 109-111; that stretch reads QFR. Cys119 and Cys124 are joined by a disulfide.

The protein belongs to the urotensin-2 family.

The protein localises to the secreted. Functionally, urotensin is found in the teleost caudal neurosecretory system. It has a suggested role in osmoregulation and as a corticotropin-releasing factor. The non-hormonal portion of this precursor may be a urotensin binding protein, urophysin. This Cyprinus carpio (Common carp) protein is Prepro-urotensin II-gamma.